The chain runs to 359 residues: MAGVACLGKTADADEWCDSGLGSLGPDAAAPGGPGLVAELSPELSWAPLVFGYVTEDGDTALHLAVIHQHEPFLDFLLGFSAGTEYLDLQNDLGQTALHLAAILGEASTVEKLYAAGAGVLVTERGGHTALHLACRVRAHTCAYVLLQPRPSHPRDASDTYLTQSQDHTPDTSHAPVATDPQPNPGNEEELRDEDWRLQLEAENYDGHTPLHVAVIHKDAEMVQLLRDAGADLNKPEPTCGRTPLHLAVEGQAAGVLALLLKAGADPTARMYGGRTPLGSALLRPNPVLARLLRAHGAPEPEDKDDKLSPCSNSSSDSDSDNRDEGDEYDDIVVHSRRSQNQPPPSPAAKPLPDDPNPA.

A phosphoserine; by RPS6KA1 mark is found at serine 19 and serine 23. 6 ANK repeats span residues 57–86 (DGDT…GTEY), 93–122 (LGQT…GVLV), 126–155 (GGHT…SHPR), 206–235 (DGHT…DLNK), 240–269 (CGRT…DPTA), and 273–302 (GGRT…PEPE). The interval 153 to 192 (HPRDASDTYLTQSQDHTPDTSHAPVATDPQPNPGNEEELR) is disordered. A compositionally biased stretch (basic and acidic residues) spans 298 to 308 (APEPEDKDDKL). Residues 298-359 (APEPEDKDDK…KPLPDDPNPA (62 aa)) are disordered. Serine 318 is subject to Phosphoserine. Residues 318 to 331 (SDSDNRDEGDEYDD) are compositionally biased toward acidic residues. Residues 342–359 (QPPPSPAAKPLPDDPNPA) show a composition bias toward pro residues.

The protein belongs to the NF-kappa-B inhibitor family. Interacts with THRB (via ligand-binding domain). Interacts with RELA and REL. Interacts with COMMD1. Interacts with inhibitor kappa B-interacting Ras-like NKIRAS1 and NKIRAS2. In terms of processing, phosphorylated by RPS6KA1; followed by degradation. Interaction with NKIRAS1 and NKIRAS2 probably prevents phosphorylation.

It is found in the cytoplasm. It localises to the nucleus. Functionally, inhibits NF-kappa-B by complexing with and trapping it in the cytoplasm. However, the unphosphorylated form resynthesized after cell stimulation is able to bind NF-kappa-B allowing its transport to the nucleus and protecting it to further NFKBIA-dependent inactivation. Association with inhibitor kappa B-interacting NKIRAS1 and NKIRAS2 prevent its phosphorylation rendering it more resistant to degradation, explaining its slower degradation. This Rattus norvegicus (Rat) protein is NF-kappa-B inhibitor beta (Nfkbib).